The sequence spans 211 residues: Glycerol-3-phosphate acyltransferase (211 aa).

The next 5 helical transmembrane spans lie at 5 to 25 (ALGM…ILFC), 58 to 78 (VLVF…ALGV), 80 to 100 (PLYL…PVFF), 112 to 132 (LGAI…TWLL), and 138 to 158 (GYSS…VWWF).

This sequence belongs to the PlsY family. In terms of assembly, probably interacts with PlsX.

The protein resides in the cell inner membrane. The catalysed reaction is an acyl phosphate + sn-glycerol 3-phosphate = a 1-acyl-sn-glycero-3-phosphate + phosphate. Its pathway is lipid metabolism; phospholipid metabolism. Catalyzes the transfer of an acyl group from acyl-phosphate (acyl-PO(4)) to glycerol-3-phosphate (G3P) to form lysophosphatidic acid (LPA). This enzyme utilizes acyl-phosphate as fatty acyl donor, but not acyl-CoA or acyl-ACP. The polypeptide is Glycerol-3-phosphate acyltransferase (Pectobacterium atrosepticum (strain SCRI 1043 / ATCC BAA-672) (Erwinia carotovora subsp. atroseptica)).